The following is a 335-amino-acid chain: Ketol-acid reductoisomerase (NADP(+)) (335 aa).

One can recognise a KARI N-terminal Rossmann domain in the interval Ser5 to Thr185. NADP(+) contacts are provided by residues Tyr28 to Gln31, Ser56, and Asp86 to Gln89. His111 is an active-site residue. Gly137 provides a ligand contact to NADP(+). In terms of domain architecture, KARI C-terminal knotted spans Thr186 to Gly331. Mg(2+) is bound by residues Asp194, Glu198, Glu230, and Glu234. Ser255 lines the substrate pocket.

The protein belongs to the ketol-acid reductoisomerase family. Mg(2+) is required as a cofactor.

The catalysed reaction is (2R)-2,3-dihydroxy-3-methylbutanoate + NADP(+) = (2S)-2-acetolactate + NADPH + H(+). The enzyme catalyses (2R,3R)-2,3-dihydroxy-3-methylpentanoate + NADP(+) = (S)-2-ethyl-2-hydroxy-3-oxobutanoate + NADPH + H(+). The protein operates within amino-acid biosynthesis; L-isoleucine biosynthesis; L-isoleucine from 2-oxobutanoate: step 2/4. Its pathway is amino-acid biosynthesis; L-valine biosynthesis; L-valine from pyruvate: step 2/4. Its function is as follows. Involved in the biosynthesis of branched-chain amino acids (BCAA). Catalyzes an alkyl-migration followed by a ketol-acid reduction of (S)-2-acetolactate (S2AL) to yield (R)-2,3-dihydroxy-isovalerate. In the isomerase reaction, S2AL is rearranged via a Mg-dependent methyl migration to produce 3-hydroxy-3-methyl-2-ketobutyrate (HMKB). In the reductase reaction, this 2-ketoacid undergoes a metal-dependent reduction by NADPH to yield (R)-2,3-dihydroxy-isovalerate. This is Ketol-acid reductoisomerase (NADP(+)) from Saccharolobus islandicus (strain L.S.2.15 / Lassen #1) (Sulfolobus islandicus).